The primary structure comprises 82 residues: Cytochrome b-c1 complex subunit 8 (82 aa).

Residues 1–39 are Mitochondrial matrix-facing; that stretch reads MGREFGNLTRIRHVISYSLSPFEQRAFPHYFSKGIPNVL. S16 carries the post-translational modification Phosphoserine. Residue K33 is modified to N6-acetyllysine; alternate. K33 is modified (N6-succinyllysine; alternate). The helical transmembrane segment at 40-68 threads the bilayer; it reads RRTRERILRVAPPFVLFYLIYTWGNQEFA. Residues 69 to 82 are Mitochondrial intermembrane-facing; that stretch reads QSKRKNPAKYENDK.

It belongs to the UQCRQ/QCR8 family. In terms of assembly, component of the ubiquinol-cytochrome c oxidoreductase (cytochrome b-c1 complex, complex III, CIII), a multisubunit enzyme composed of 11 subunits. The complex is composed of 3 respiratory subunits cytochrome b, cytochrome c1 and Rieske protein UQCRFS1, 2 core protein subunits UQCRC1/QCR1 and UQCRC2/QCR2, and 6 low-molecular weight protein subunits UQCRH/QCR6, UQCRB/QCR7, UQCRQ/QCR8, UQCR10/QCR9, UQCR11/QCR10 and subunit 9, the cleavage product of Rieske protein UQCRFS1. The complex exists as an obligatory dimer and forms supercomplexes (SCs) in the inner mitochondrial membrane with NADH-ubiquinone oxidoreductase (complex I, CI) and cytochrome c oxidase (complex IV, CIV), resulting in different assemblies (supercomplex SCI(1)III(2)IV(1) and megacomplex MCI(2)III(2)IV(2)). Interacts with UQCC6.

The protein localises to the mitochondrion inner membrane. In terms of biological role, component of the ubiquinol-cytochrome c oxidoreductase, a multisubunit transmembrane complex that is part of the mitochondrial electron transport chain which drives oxidative phosphorylation. The respiratory chain contains 3 multisubunit complexes succinate dehydrogenase (complex II, CII), ubiquinol-cytochrome c oxidoreductase (cytochrome b-c1 complex, complex III, CIII) and cytochrome c oxidase (complex IV, CIV), that cooperate to transfer electrons derived from NADH and succinate to molecular oxygen, creating an electrochemical gradient over the inner membrane that drives transmembrane transport and the ATP synthase. The cytochrome b-c1 complex catalyzes electron transfer from ubiquinol to cytochrome c, linking this redox reaction to translocation of protons across the mitochondrial inner membrane, with protons being carried across the membrane as hydrogens on the quinol. In the process called Q cycle, 2 protons are consumed from the matrix, 4 protons are released into the intermembrane space and 2 electrons are passed to cytochrome c. The protein is Cytochrome b-c1 complex subunit 8 (Uqcrq) of Rattus norvegicus (Rat).